The primary structure comprises 516 residues: Nucleolar complex protein 4 homolog (516 aa).

Transmembrane regions (helical) follow at residues 296–316, 347–367, and 375–395; these read SACD…FILI, FFHL…LVAA, and LALT…CNLL.

This sequence belongs to the CBF/MAK21 family.

It localises to the nucleus membrane. Its subcellular location is the nucleus. It is found in the nucleolus. This Mus musculus (Mouse) protein is Nucleolar complex protein 4 homolog (Noc4l).